The following is a 120-amino-acid chain: Large ribosomal subunit protein uL18 (120 aa).

Belongs to the universal ribosomal protein uL18 family. Part of the 50S ribosomal subunit; part of the 5S rRNA/L5/L18/L25 subcomplex. Contacts the 5S and 23S rRNAs.

This is one of the proteins that bind and probably mediate the attachment of the 5S RNA into the large ribosomal subunit, where it forms part of the central protuberance. The sequence is that of Large ribosomal subunit protein uL18 from Geobacillus kaustophilus (strain HTA426).